Here is a 201-residue protein sequence, read N- to C-terminus: Recombination protein RecR (201 aa).

The C4-type zinc-finger motif lies at 59 to 74 (CEICGNMDTENMCRIC). The Toprim domain maps to 82–177 (SIIAIVETVA…KISRLASGIP (96 aa)).

It belongs to the RecR family.

May play a role in DNA repair. It seems to be involved in an RecBC-independent recombinational process of DNA repair. It may act with RecF and RecO. The sequence is that of Recombination protein RecR from Rickettsia africae (strain ESF-5).